The chain runs to 897 residues: High molecular weight rhoptry protein 3 (897 aa).

The N-terminal stretch at 1 to 24 (MRSKHLVTLFIITFLSFSTVKVWG) is a signal peptide. Cystine bridges form between Cys-157-Cys-231, Cys-244-Cys-253, Cys-262-Cys-276, Cys-421-Cys-620, and Cys-475-Cys-536. The chain crosses the membrane as a helical span at residues 597–615 (FVLYFISIISVLYINEYYY). Disordered stretches follow at residues 788 to 845 (KEQS…SNLK) and 859 to 897 (QLDKEKPKKKKSKRKKKRDSSSDRILLEESKTFTSENEL). Polar residues predominate over residues 792–801 (KSTSAASTSD). A compositionally biased stretch (low complexity) spans 802–817 (ELSGSEGPSTESTSTG). Ser-804 bears the Phosphoserine mark. A compositionally biased stretch (basic and acidic residues) spans 820–832 (GEDKTTDNTYKEM). The span at 865 to 876 (PKKKKSKRKKKR) shows a compositional bias: basic residues. A compositionally biased stretch (basic and acidic residues) spans 877–889 (DSSSDRILLEESK).

Component of the RhopH complex, composed of CLAG3.1/CLAG3.2, RhopH2 and RhopH3 with a 1:1:1 subunit stoichiometry. Interacts with CLAG3.1/CLAG3.2. Interacts with CDPK1; the interaction promotes RhopH3 phosphorylation in merozoites. Proteolytically cleaved near C-terminus.

The protein localises to the host cell membrane. It is found in the parasitophorous vacuole membrane. The protein resides in the cytoplasmic vesicle. It localises to the secretory vesicle. Its subcellular location is the rhoptry. In terms of biological role, participates in the formation of new permeability pathways in Plasmodium-infected erythrocytes enabling the uptake of nutrients from the blood plasma. Required for maintaining invasion capacity of merozoites. Required for the trophozoite to schizont developmental transition of the intracellular parasite. The chain is High molecular weight rhoptry protein 3 from Plasmodium falciparum.